We begin with the raw amino-acid sequence, 303 residues long: 5-dehydro-4-deoxyglucarate dehydratase (303 aa).

Belongs to the DapA family.

It catalyses the reaction 5-dehydro-4-deoxy-D-glucarate + H(+) = 2,5-dioxopentanoate + CO2 + H2O. The protein operates within carbohydrate acid metabolism; D-glucarate degradation; 2,5-dioxopentanoate from D-glucarate: step 2/2. The chain is 5-dehydro-4-deoxyglucarate dehydratase from Pseudomonas putida (Arthrobacter siderocapsulatus).